The primary structure comprises 168 residues: S-ribosylhomocysteine lyase (168 aa).

Fe cation is bound by residues H54, H58, and C128.

This sequence belongs to the LuxS family. Homodimer. The cofactor is Fe cation.

It carries out the reaction S-(5-deoxy-D-ribos-5-yl)-L-homocysteine = (S)-4,5-dihydroxypentane-2,3-dione + L-homocysteine. Functionally, involved in the synthesis of autoinducer 2 (AI-2) which is secreted by bacteria and is used to communicate both the cell density and the metabolic potential of the environment. The regulation of gene expression in response to changes in cell density is called quorum sensing. Catalyzes the transformation of S-ribosylhomocysteine (RHC) to homocysteine (HC) and 4,5-dihydroxy-2,3-pentadione (DPD). This is S-ribosylhomocysteine lyase from Mannheimia succiniciproducens (strain KCTC 0769BP / MBEL55E).